The following is a 416-amino-acid chain: Fusaric acid cluster transcription factor FUB10 (416 aa).

A DNA-binding region (zn(2)-C6 fungal-type) is located at residues 16–47 (CDRCRAQKLRCHRDSGHSTDACLRCLKSGIEC). The disordered stretch occupies residues 50–92 (SKARPTGRPPSRQVQPTVSVEQGDTSSSSHTTDSSPSAGGTDI). Residues 61 to 73 (RQVQPTVSVEQGD) are compositionally biased toward polar residues. Positions 74–86 (TSSSSHTTDSSPS) are enriched in low complexity.

It localises to the nucleus. Its function is as follows. Transcription factor that regulates the expression of the gene cluster that mediates the biosynthesis of fusaric acid, a mycotoxin with low to moderate toxicity to animals and humans, but with high phytotoxic properties. The sequence is that of Fusaric acid cluster transcription factor FUB10 from Fusarium oxysporum f. sp. lycopersici (strain 4287 / CBS 123668 / FGSC 9935 / NRRL 34936) (Fusarium vascular wilt of tomato).